Here is a 327-residue protein sequence, read N- to C-terminus: Zinc transport protein ZntB (327 aa).

Topologically, residues 1-273 are cytoplasmic; that stretch reads MDAIKGSELQ…ARRTYTMSLM (273 aa). Residues 274–294 form a helical membrane-spanning segment; sequence AMVFLPSTFLTGLFGVNLGGI. Topologically, residues 295–300 are periplasmic; sequence PGNSWH. Residues 301 to 321 traverse the membrane as a helical segment; the sequence is LGFSLFCLMLVVVIGGVAWWL. Residues 322–327 lie on the Cytoplasmic side of the membrane; that stretch reads HRSKWL.

The protein belongs to the CorA metal ion transporter (MIT) (TC 1.A.35) family.

The protein localises to the cell inner membrane. The catalysed reaction is Zn(2+)(out) + H(+)(out) = Zn(2+)(in) + H(+)(in). Zinc transporter. Acts as a Zn(2+):proton symporter, which likely mediates zinc ion uptake. This is Zinc transport protein ZntB from Klebsiella pneumoniae subsp. pneumoniae (strain ATCC 700721 / MGH 78578).